The following is an 803-amino-acid chain: Ras GTPase-activating protein 4B (803 aa).

2 consecutive C2 domains span residues 1–105 and 116–232; these read MAKR…SGWA and VQGE…EGWF. Residues D21, D27, D74, D76, S79, D82, D149, D155, D202, D204, S207, and D210 each coordinate Ca(2+). The 229-residue stretch at 318–546 folds into the Ras-GAP domain; sequence GLAKDFLDLL…AQLKDFITKL (229 aa). The PH domain maps to 566–673; it reads PPVKEGPLFI…WLSALRKVSI (108 aa). The Btk-type zinc-finger motif lies at 675–711; the sequence is NTGLLGSYHPGVFRGDKWSCCHQKEKTGQGCDKTRSR. The Zn(2+) site is built by H683, C694, C695, and C705. The interval 781-803 is disordered; that stretch reads EAHSSSPAGSPPSEPNCLLELQT.

Requires Ca(2+) as cofactor.

Its subcellular location is the cytoplasm. It is found in the cytosol. It localises to the cell membrane. Its function is as follows. Ca(2+)-dependent Ras GTPase-activating protein, that may play a role in the Ras-MAPK pathway. In Homo sapiens (Human), this protein is Ras GTPase-activating protein 4B (RASA4B).